We begin with the raw amino-acid sequence, 402 residues long: Phosphoglycerate kinase (402 aa).

Substrate is bound by residues 24 to 26 (DFN), R40, 63 to 66 (HFGR), R122, and R155. ATP contacts are provided by residues K206, G297, E328, and 358 to 361 (GGDS).

It belongs to the phosphoglycerate kinase family. In terms of assembly, monomer.

It is found in the cytoplasm. It carries out the reaction (2R)-3-phosphoglycerate + ATP = (2R)-3-phospho-glyceroyl phosphate + ADP. Its pathway is carbohydrate degradation; glycolysis; pyruvate from D-glyceraldehyde 3-phosphate: step 2/5. The chain is Phosphoglycerate kinase from Prochlorococcus marinus (strain AS9601).